A 463-amino-acid polypeptide reads, in one-letter code: Glutamate--tRNA ligase (463 aa).

The 'HIGH' region signature appears at 8 to 18 (PSPTGYLHIGG). The short motif at 236 to 240 (RLSKR) is the 'KMSKS' region element. K239 contacts ATP.

Belongs to the class-I aminoacyl-tRNA synthetase family. Glutamate--tRNA ligase type 1 subfamily. Monomer.

Its subcellular location is the cytoplasm. The catalysed reaction is tRNA(Glu) + L-glutamate + ATP = L-glutamyl-tRNA(Glu) + AMP + diphosphate. Its function is as follows. Catalyzes the attachment of glutamate to tRNA(Glu) in a two-step reaction: glutamate is first activated by ATP to form Glu-AMP and then transferred to the acceptor end of tRNA(Glu). This is Glutamate--tRNA ligase from Nitrosomonas eutropha (strain DSM 101675 / C91 / Nm57).